Consider the following 332-residue polypeptide: Glyceraldehyde-3-phosphate dehydrogenase (332 aa).

Residues 12 to 13 (RI), Asp34, Lys78, and Thr120 contribute to the NAD(+) site. Residues 149–151 (SCT), Thr180, 209–210 (TG), and Arg232 contribute to the D-glyceraldehyde 3-phosphate site. The active-site Nucleophile is Cys150. Asn314 serves as a coordination point for NAD(+).

Belongs to the glyceraldehyde-3-phosphate dehydrogenase family. In terms of assembly, homotetramer.

The protein resides in the cytoplasm. The enzyme catalyses D-glyceraldehyde 3-phosphate + phosphate + NAD(+) = (2R)-3-phospho-glyceroyl phosphate + NADH + H(+). It functions in the pathway carbohydrate degradation; glycolysis; pyruvate from D-glyceraldehyde 3-phosphate: step 1/5. Catalyzes the oxidative phosphorylation of glyceraldehyde 3-phosphate (G3P) to 1,3-bisphosphoglycerate (BPG) using the cofactor NAD. The first reaction step involves the formation of a hemiacetal intermediate between G3P and a cysteine residue, and this hemiacetal intermediate is then oxidized to a thioester, with concomitant reduction of NAD to NADH. The reduced NADH is then exchanged with the second NAD, and the thioester is attacked by a nucleophilic inorganic phosphate to produce BPG. This Buchnera aphidicola subsp. Schizaphis graminum (strain Sg) protein is Glyceraldehyde-3-phosphate dehydrogenase (gapA).